The primary structure comprises 808 residues: Probable inorganic carbon transporter subunit DabA (808 aa).

Positions 334, 336, 494, and 509 each coordinate Zn(2+).

It belongs to the inorganic carbon transporter (TC 9.A.2) DabA family. In terms of assembly, forms a complex with DabB. The cofactor is Zn(2+).

The protein resides in the cell inner membrane. In terms of biological role, part of an energy-coupled inorganic carbon pump. This chain is Probable inorganic carbon transporter subunit DabA, found in Rhodopseudomonas palustris (strain BisB5).